Consider the following 91-residue polypeptide: Pre-early 3 receptor internalization and degradation alpha protein (91 aa).

Over 1–4 the chain is Cytoplasmic; sequence MIPR. A propeptide spans 1–22 (signal peptide); that stretch reads MIPRVLILLTLVALFCACSTLA. Residues 5-25 traverse the membrane as a helical segment; it reads VLILLTLVALFCACSTLAAVA. The Lumenal portion of the chain corresponds to 26-34; that stretch reads HIEVDCIPP. The helical transmembrane segment at 35–60 threads the bilayer; sequence FTVYLLYGFVTLILICSLVTVVIAFI. Topologically, residues 61–91 are cytoplasmic; the sequence is QFIDWVCVRIAYLRHHPQYRDRTIADLLRIL.

Belongs to the adenoviridae E3-RID-alpha family. Homodimer with only one chain cleaved by signal peptidase. Interacts with E3 RID-beta and E3 CR1-alpha. In terms of processing, the signal peptide is only cleaved partially by host signal peptidase. This results in two forms of the protein, one uncleaved with two transmembrane regions, and one cleaved with one transmembrane region.

Its subcellular location is the host membrane. It localises to the host endoplasmic reticulum. Its function is as follows. Prevents infected cell apoptosis induced by the host immune system. Acts by down-regulating a number of cell surface receptors in the tumor necrosis factor (TNF) receptor superfamily, namely FAS, TNFRSF10A/TRAIL receptor 1, and TNFRSF10B/TRAIL receptor 2. Down-regulation of these death receptors protects adenovirus-infected cells from apoptosis induced by the death receptor ligands Fas ligand and TRAIL. RID complex also down-regulates certain tyrosine kinase cell surface receptors, especially the epidermal growth factor receptor (EGFR). RID-mediated Fas and EGFR down-regulation occurs via endocytosis of the receptors into endosomes followed by transport to and degradation within lysosomes. The sequence is that of Pre-early 3 receptor internalization and degradation alpha protein from Homo sapiens (Human).